A 281-amino-acid chain; its full sequence is Cell growth regulator with EF hand domain protein 1 (281 aa).

A signal peptide spans 1 to 21 (MSRWLMQMLMLPLLLLPLGQA). 2 consecutive EF-hand domains span residues 71–106 (NREQVLLYLFALHDFDQNGQLDGLELLSMLTAALAP) and 115–150 (PVILVVDMVLETQDLDGDGLMTPAELINFPGEAPKR). Residues D84, D86, N88, Q90, E95, D128, D130, D132, and E139 each coordinate Ca(2+). Positions 146–281 (EAPKRAESLP…HSIQLENDEI (136 aa)) are disordered. Over residues 169–184 (LLANSPLQSETQQSLG) the composition is skewed to polar residues. Basic and acidic residues predominate over residues 185-213 (TKEEITSQVEAKRALEPEQEAGHHIETKV). Phosphoserine occurs at positions 217 and 228. A compositionally biased stretch (basic and acidic residues) spans 234 to 256 (GPREDAERQVESKDNEGEAKDLP).

Post-translationally, probably digested extracellularly by an unknown serine protease generating extremely hydrophobic bioactive peptides. Expressed predominantly in whole brain and kidney, with limited expression in heart, lung, liver, and skeletal muscle and no expression in spleen and testis. Also expressed in pituitary gland, adrenal gland, digestive tract, and reproductive organs.

Its subcellular location is the secreted. In terms of biological role, mediates cell-cell adhesion in a calcium-dependent manner. Able to inhibit growth in several cell lines. This Rattus norvegicus (Rat) protein is Cell growth regulator with EF hand domain protein 1.